The chain runs to 182 residues: Transcription termination/antitermination protein NusG (182 aa).

The protein belongs to the NusG family.

Its function is as follows. Participates in transcription elongation, termination and antitermination. The chain is Transcription termination/antitermination protein NusG from Chlamydia trachomatis serovar D (strain ATCC VR-885 / DSM 19411 / UW-3/Cx).